Here is a 336-residue protein sequence, read N- to C-terminus: Protein ABHD13 (336 aa).

The helical; Signal-anchor for type II membrane protein transmembrane segment at 37–57 threads the bilayer; that stretch reads FNMYGGVILLLLIFVSIAGIL. Active-site charge relay system residues include serine 193, aspartate 268, and histidine 298. N-linked (GlcNAc...) asparagine glycosylation is present at asparagine 299.

This sequence belongs to the serine esterase family.

It is found in the membrane. The polypeptide is Protein ABHD13 (Xenopus laevis (African clawed frog)).